Here is a 131-residue protein sequence, read N- to C-terminus: Small ribosomal subunit protein uS8 (131 aa).

It belongs to the universal ribosomal protein uS8 family. As to quaternary structure, part of the 30S ribosomal subunit. Contacts proteins S5 and S12.

One of the primary rRNA binding proteins, it binds directly to 16S rRNA central domain where it helps coordinate assembly of the platform of the 30S subunit. In Chromobacterium violaceum (strain ATCC 12472 / DSM 30191 / JCM 1249 / CCUG 213 / NBRC 12614 / NCIMB 9131 / NCTC 9757 / MK), this protein is Small ribosomal subunit protein uS8.